A 485-amino-acid polypeptide reads, in one-letter code: Cysteine--tRNA ligase (485 aa).

Residue Cys28 participates in Zn(2+) binding. A 'HIGH' region motif is present at residues 30–40; sequence MTVYDYCHLGH. Zn(2+) is bound by residues Cys212, His237, and Glu241. Positions 269 to 273 match the 'KMSKS' region motif; it reads KMSKS. ATP is bound at residue Lys272.

Belongs to the class-I aminoacyl-tRNA synthetase family. Monomer. Requires Zn(2+) as cofactor.

Its subcellular location is the cytoplasm. It catalyses the reaction tRNA(Cys) + L-cysteine + ATP = L-cysteinyl-tRNA(Cys) + AMP + diphosphate. This Bordetella bronchiseptica (strain ATCC BAA-588 / NCTC 13252 / RB50) (Alcaligenes bronchisepticus) protein is Cysteine--tRNA ligase.